Here is a 320-residue protein sequence, read N- to C-terminus: Transaldolase (320 aa).

Residue Lys126 is the Schiff-base intermediate with substrate of the active site.

Belongs to the transaldolase family. Type 1 subfamily. In terms of assembly, homodimer.

The protein localises to the cytoplasm. It catalyses the reaction D-sedoheptulose 7-phosphate + D-glyceraldehyde 3-phosphate = D-erythrose 4-phosphate + beta-D-fructose 6-phosphate. Its pathway is carbohydrate degradation; pentose phosphate pathway; D-glyceraldehyde 3-phosphate and beta-D-fructose 6-phosphate from D-ribose 5-phosphate and D-xylulose 5-phosphate (non-oxidative stage): step 2/3. Functionally, transaldolase is important for the balance of metabolites in the pentose-phosphate pathway. This Bordetella bronchiseptica (strain ATCC BAA-588 / NCTC 13252 / RB50) (Alcaligenes bronchisepticus) protein is Transaldolase.